Here is a 410-residue protein sequence, read N- to C-terminus: Regulator of microtubule dynamics protein 2 (410 aa).

A helical membrane pass occupies residues 10-27 (IFGIMVGTAGISLLLLWY). Phosphoserine is present on Ser51. Residues 68 to 110 (FQERQLQILEKLNELLTNMEELKEEIRFLKETVPKLEEYIQDE) adopt a coiled-coil conformation. Phosphoserine is present on Ser121. The segment covering 122 to 131 (PQHRARKRRL) has biased composition (basic residues). The tract at residues 122 to 151 (PQHRARKRRLPTIQSSATSNSSEEAESEGG) is disordered. Phosphothreonine is present on Thr139. Tyr152 carries the post-translational modification Phosphotyrosine. Phosphothreonine is present on residues Thr154 and Thr157.

The protein belongs to the RMDN family. As to quaternary structure, interacts with microtubules.

It is found in the membrane. The protein localises to the cytoplasm. Its subcellular location is the cytoskeleton. The protein resides in the spindle. It localises to the spindle pole. The polypeptide is Regulator of microtubule dynamics protein 2 (RMDN2) (Macaca fascicularis (Crab-eating macaque)).